Reading from the N-terminus, the 202-residue chain is Small ribosomal subunit protein uS4 (202 aa).

The tract at residues 15 to 42 is disordered; it reads LGDLPGLTRKAAKRSYPPGQHGQARRKR. The region spanning 90–152 is the S4 RNA-binding domain; that stretch reads NRLDNVCFRL…KCSKQLAEGN (63 aa).

Belongs to the universal ribosomal protein uS4 family. In terms of assembly, part of the 30S ribosomal subunit. Contacts protein S5. The interaction surface between S4 and S5 is involved in control of translational fidelity.

Its function is as follows. One of the primary rRNA binding proteins, it binds directly to 16S rRNA where it nucleates assembly of the body of the 30S subunit. Functionally, with S5 and S12 plays an important role in translational accuracy. The chain is Small ribosomal subunit protein uS4 from Parasynechococcus marenigrum (strain WH8102).